The following is a 93-amino-acid chain: Small ribosomal subunit protein uS17 (93 aa).

The protein belongs to the universal ribosomal protein uS17 family. In terms of assembly, part of the 30S ribosomal subunit.

One of the primary rRNA binding proteins, it binds specifically to the 5'-end of 16S ribosomal RNA. The polypeptide is Small ribosomal subunit protein uS17 (Rhodococcus jostii (strain RHA1)).